A 950-amino-acid chain; its full sequence is Serine/threonine-protein phosphatase 4 regulatory subunit 1 (950 aa).

HEAT repeat units follow at residues 1-25, 26-63, 65-81, 82-119, 127-164, 168-206, 208-246, 248-285, and 287-324; these read MADL…DYSS, ESDV…IFNR, MVAR…CDDE, RDCI…FCQE, AFSK…QELI, DVET…MVGK, ITER…VVGQ, ATEE…ATCQ, and IRRT…TFAN. 3 disordered regions span residues 326-374, 413-438, and 473-499; these read SSSG…SVSN, ESHQ…RPEV, and EQNS…SPNI. Residues 332-365 show a composition bias toward basic and acidic residues; sequence FKEESKSSEEMSVENKNRTRDQEAPEDVQVRPED. HEAT repeat units follow at residues 505 to 542, 568 to 606, 698 to 734, 799 to 837, and 861 to 898; these read KELE…LDAH, INQE…FSPD, LTAA…LLHI, WISY…RCPK, and QFAV…EKDY. Phosphoserine is present on S935.

As to quaternary structure, serine/threonine-protein phosphatase 4 (PP4) occurs in different assemblies of the catalytic and one or more regulatory subunits. Component of the PP4 complex PPP4C-PPP4R1. Interacts with HDAC3. In terms of assembly, (Microbial infection) Interacts with merkel polyomavirus small tumor antigen; this interaction bridges small tumor antigen with NEMO to inhibit NF-kappa-B. Widely expressed with high expression in cultured mesangial cells. Isoform 1 and isoform 2 are expressed in renal tissues.

Functionally, regulatory subunit of serine/threonine-protein phosphatase 4. May play a role in regulation of cell division in renal glomeruli. The PPP4C-PPP4R1 PP4 complex may play a role in dephosphorylation and regulation of HDAC3. Plays a role in the inhibition of TNF-induced NF-kappa-B activation by regulating the dephosphorylation of TRAF2. In terms of biological role, (Microbial infection) Participates in merkel polyomavirus-mediated inhibition of NF-kappa-B by bridging viral small tumor antigen with NEMO. The chain is Serine/threonine-protein phosphatase 4 regulatory subunit 1 (PPP4R1) from Homo sapiens (Human).